The primary structure comprises 710 residues: Ephexin-1 (710 aa).

Basic and acidic residues-rich tracts occupy residues 1-11 and 26-41; these read METRESEDLEK and EPAKVKPELLPEKEET. The disordered stretch occupies residues 1–143; sequence METRESEDLE…PGNGATPEEW (143 aa). The segment at 1-273 is regulatory region; modulates activity toward RHOA, RAC1 and CDC42; sequence METRESEDLE…LEILQPEEIK (273 aa). 2 stretches are compositionally biased toward polar residues: residues 89–102 and 127–136; these read ADSQDNGKSVNEPL and MSESSSTPGN. Tyr179 carries the post-translational modification Phosphotyrosine. The interval 194 to 236 is disordered; it reads RRQQDAEIEDNTNGSPASEDTPEEEEEEEEEEEPASPPERKTL. Residues 213–227 are compositionally biased toward acidic residues; the sequence is DTPEEEEEEEEEEEP. In terms of domain architecture, DH spans 273 to 457; the sequence is KLQEAMFELV…EMVVKACNEG (185 aa). Positions 489-601 constitute a PH domain; sequence WLLKQGELQQ…WMTSLAPNRR (113 aa). The SH3 domain occupies 612–673; that stretch reads LDCPQVQCVH…PSSMTEEILN (62 aa). A compositionally biased stretch (basic and acidic residues) spans 687–699; it reads VHKMDDPQRSQNK. Residues 687–710 are disordered; it reads VHKMDDPQRSQNKDRRKLGSRNRQ. A compositionally biased stretch (basic residues) spans 700–710; that stretch reads DRRKLGSRNRQ.

In terms of assembly, interacts with CDK5R1 and EPHA4; activated by EPHA4 through the CDK5 kinase. Src-dependent phosphorylation at Tyr-179 upon EPHA4 activation increases the guanine exchange factor activity toward RHOA. Phosphorylation by CDK5 upon EPHA4 activation by EFNA1 may regulate dendritic spine morphogenesis. In terms of tissue distribution, highly expressed in brain specifically in caudate nucleus and to a lower extent in amygdala and hippocampus. Also detected in lung.

Its subcellular location is the cytoplasm. The protein localises to the membrane. It localises to the cell projection. The protein resides in the growth cone. Acts as a guanine nucleotide exchange factor (GEF) which differentially activates the GTPases RHOA, RAC1 and CDC42. Plays a role in axon guidance regulating ephrin-induced growth cone collapse and dendritic spine morphogenesis. Upon activation by ephrin through EPHA4, the GEF activity switches toward RHOA resulting in its activation. Activated RHOA promotes cone retraction at the expense of RAC1- and CDC42-stimulated growth cone extension. In Homo sapiens (Human), this protein is Ephexin-1 (NGEF).